The sequence spans 1346 residues: MTGAEVEPGAQAKAENKPGDENANAAEVEPEVPLVVRPKVRTQMMTGARPKVKPKGTPGARPKGETSSPGGAYAKCKPRSIPISRSKHDAQVWAPSKFRGESMSKMGKQCQISAADSPLVSNDSGAVAQAKCLSVDRELANMDTESIPKKASSPARFQPSFGPEEGTSMGSWYRPRPIPKGEAYENSDFKWADKSSGSSSFWNRDETSTRFRPRKSMKSNTRFRHMAKQEANTMSRHKNKQEFYNISSSDSEDESAKTPWFWAKDKPKVWSRPKEEPNTRSWFRSKKEVRVESTSGSECENHTKSLFWSGEEAKCRSKPRARKGVNMRARHQAKREAYSDVTSGSVDKNKKDSWFLPEEKANAFSKSKTKKEPRTRAMPREEVKTKARASTKQEARPEEEVLVGAWVLDTQDNTMGERISMKTTCVEEEPIVGDWFWSEEEASVDSETGLKSRPRAKEEQVSSFCLGSGKKTSMESGPKATSKSMPVAKDDEVIIGSWFWADDEEISLQADDESIFGSWFWGTGEKSLRSVGVSCEKMPKSGEKEVTDSWFWAGEVNTEAEMEEQASSASTKGTIFVPWFWSEKQAHMDLGTEPCSDIMAGAEEEPIIGPWFWAKVDNSVEAEVNSKSSLEDEEEPIRSPWFGAREQPNMKYAAGVGYKPMAEAEEANKKSCVWAKEPCLYPTNRESLKSTLGEKEDTVDPWLWSNNYPRTETITGSWLWAAEEGNIDDETGEEIKLPTLEDNVFNSWSWKENEETVVEAPNREESKPEAEEEDIIGSWFWAGDEDRFQPAAKIKEENKIAPEDEDTVGSWFWGKEEASVEAVKGGTFESVSGIKEEKATGSWFWTDKAKIGAGPQTVETGSETEDEAIFESLIWAAKKDSMQTGVNRVSKPKDEGEGIESWLWSGDKATTESKTVTVSESSPENGKESIVKFGSRAKDEVINKTGSGDNCKFSTEAESIVGPWFWEGDEASFESNPVPVCKAACEPESSTEHEPDPSRRPQSWDEVTVQFKPGPWGKAGFPSLNPFRFPKEAASLFAEMFGGKPKLVEVGTEREPEPQFPFQYDPSYRSVREIREHLKARESAQAENWSCNCIQCELRIGSEEFEELLLMMDRNRDPFIHEISKIAMGMRGASQFTRDFIRNSGVISLIEALMNYPSSRARTAFLENMIQMAPTYPDLNMIETYVCQVCEDTFDYDLDSSDQLSGLTMITHLTTTFDYHKVVVAYLAGFYYLLNSGNTTTRFHVLKLLLNLSESLVMTKRLLITDSVSEFMALFNREDSDENIQIILAIFENISKNIQKEALFADDEEEEEEEEAVNLEPLISAFREAEKFAKELKRKTDDQKSP.

3 disordered regions span residues 1–101, 144–177, and 192–258; these read MTGA…FRGE, TESI…RPRP, and ADKS…SAKT. Low complexity predominate over residues 21–36; sequence ENANAAEVEPEVPLVV. Positions 211–226 are enriched in basic residues; it reads FRPRKSMKSNTRFRHM. The residue at position 295 (S295) is a Phosphoserine. Disordered regions lie at residues 311-399 and 461-485; these read EEAK…RPEE and VSSF…SKSM. Positions 316-333 are enriched in basic residues; that stretch reads RSKPRARKGVNMRARHQA. 2 stretches are compositionally biased toward basic and acidic residues: residues 347 to 361 and 370 to 399; these read DKNK…EEKA and KKEP…RPEE. The segment covering 461–484 has biased composition (polar residues); sequence VSSFCLGSGKKTSMESGPKATSKS. Phosphoserine is present on residues S619 and S626. T860 carries the post-translational modification Phosphothreonine. S862 is modified (phosphoserine). The tract at residues 984–1004 is disordered; sequence ACEPESSTEHEPDPSRRPQSW. The span at 990-1003 shows a compositional bias: basic and acidic residues; that stretch reads STEHEPDPSRRPQS.

Belongs to the GPRASP family. Interacts with cytoplasmic tails of a variety of G-protein coupled receptors such as delta opioid receptor/OPRD1, beta-2 adrenergic receptor/ADRB2 and D4 dopamine receptor/DRD4. Interacts with BECN2; the interaction is direct and with D2 dopamine receptor/DRD2. Interacts with PER1. Expressed in the brain.

Its subcellular location is the cytoplasm. Functionally, modulates lysosomal sorting and functional down-regulation of a variety of G-protein coupled receptors. Targets receptors for degradation in lysosomes via its interaction with BECN2. The sequence is that of G-protein coupled receptor-associated sorting protein 1 (Gprasp1) from Rattus norvegicus (Rat).